The following is a 554-amino-acid chain: Germacrene A synthase (554 aa).

Residues aspartate 306, aspartate 310, threonine 453, and glutamate 457 each contribute to the Mg(2+) site. A DDXXD motif motif is present at residues 306 to 310 (DDTYD).

This sequence belongs to the terpene synthase family. Mg(2+) serves as cofactor.

The protein localises to the cytoplasm. Its subcellular location is the cytosol. The catalysed reaction is (2E,6E)-farnesyl diphosphate = (+)-(R)-germacrene A + diphosphate. Its pathway is secondary metabolite biosynthesis; terpenoid biosynthesis. Functionally, sesquiterpene synthase involved in germacrene A biosynthesis. Also produces additional sesquiterpene products, including 4,5-di-epi-aristolochene, eremophilene, alpha-selinene. In Pogostemon cablin (Patchouli), this protein is Germacrene A synthase.